Here is a 295-residue protein sequence, read N- to C-terminus: Ankyrin repeat and SOCS box protein 17 (295 aa).

The stretch at S146–K176 is one ANK repeat. The SOCS box domain maps to D243–S295.

The protein belongs to the ankyrin SOCS box (ASB) family. Specifically expressed in testis. Localizes to spermatogenic cells in testis, with highest expression in round spermatids and condensing spermatids and lower expression in pachytene spermatocytes.

The protein operates within protein modification; protein ubiquitination. Functionally, may be a substrate-recognition component of a SCF-like ECS (Elongin-Cullin-SOCS-box protein) E3 ubiquitin-protein ligase complex which mediates the ubiquitination and subsequent proteasomal degradation of target proteins. In Mus musculus (Mouse), this protein is Ankyrin repeat and SOCS box protein 17 (Asb17).